The primary structure comprises 444 residues: Phosphoglucosamine mutase (444 aa).

The active-site Phosphoserine intermediate is the Ser-101. Ser-101, Asp-239, Asp-241, and Asp-243 together coordinate Mg(2+). Residue Ser-101 is modified to Phosphoserine.

Belongs to the phosphohexose mutase family. Requires Mg(2+) as cofactor. Post-translationally, activated by phosphorylation.

It catalyses the reaction alpha-D-glucosamine 1-phosphate = D-glucosamine 6-phosphate. In terms of biological role, catalyzes the conversion of glucosamine-6-phosphate to glucosamine-1-phosphate. The sequence is that of Phosphoglucosamine mutase from Alcanivorax borkumensis (strain ATCC 700651 / DSM 11573 / NCIMB 13689 / SK2).